The sequence spans 122 residues: Small ribosomal subunit protein uS13 (122 aa).

The segment at 92–122 (HRKQLPVRGQRTHTNARTRKGKAKPIAGKKK) is disordered.

The protein belongs to the universal ribosomal protein uS13 family. Part of the 30S ribosomal subunit. Forms a loose heterodimer with protein S19. Forms two bridges to the 50S subunit in the 70S ribosome.

Functionally, located at the top of the head of the 30S subunit, it contacts several helices of the 16S rRNA. In the 70S ribosome it contacts the 23S rRNA (bridge B1a) and protein L5 of the 50S subunit (bridge B1b), connecting the 2 subunits; these bridges are implicated in subunit movement. Contacts the tRNAs in the A and P-sites. This chain is Small ribosomal subunit protein uS13, found in Methylobacterium radiotolerans (strain ATCC 27329 / DSM 1819 / JCM 2831 / NBRC 15690 / NCIMB 10815 / 0-1).